The sequence spans 6668 residues: Centrosome-associated protein CEP250 (6668 aa).

20 coiled-coil regions span residues 562-589, 632-666, 873-988, 1042-1087, 1252-1307, 1333-1427, 1501-1538, 1594-1688, 1896-1930, 1975-2224, 2298-3272, 3298-3436, 3526-3599, 3697-3773, 3856-4137, 4170-4486, 4515-5078, 5165-5202, 5298-5731, and 5927-6119; these read KAFHEAQLARAREETKTLRQKIAALQQD, TRELTERLQAALAVNESLREELLEARQQLSLLRAS, HTEC…LRSS, LRMS…HEAA, VEDL…AVSR, LESL…LEKK, RPAAEEAVERETNLKKELEAAHQQKNEAEEMCKELGTQ, REAL…SEVA, HDILVGRVEELERMQTELEEQRRMLTKHLQQTTEK, EETL…AKQS, AEDE…LKME, QQEL…SRAE, LVQL…AKEE, CASL…EERR, TEML…VEAE, RRKL…LRER, LETL…FRRR, LASLGQELEEERWQVKQLQELLKEVDSARKEALEQETL, LREK…QHRV, and TQAL…LWRQ.

Proteolytically cleaved; only the full-length form localizes to the inner core, while processed version also localizes to the outer core during the onset of cell division.

It is found in the cytoplasm. It localises to the cytoskeleton. Its subcellular location is the microtubule organizing center. The protein resides in the centrosome. In terms of biological role, part of the centrosome inner core complex. Required for the linking of centrosomal inner and outer cores. The chain is Centrosome-associated protein CEP250 from Toxoplasma gondii (strain ATCC 50611 / Me49).